A 358-amino-acid polypeptide reads, in one-letter code: Presenilin hop-1 (358 aa).

Residues 1 to 12 lie on the Cytoplasmic side of the membrane; sequence MPRTKRVYSGKT. The helical transmembrane segment at 13 to 33 threads the bilayer; that stretch reads ITGVLYPVAICMLFVAINVKL. Residues 34 to 57 are Lumenal-facing; that stretch reads SQPEQQEQSKVVYGLFHSYDTADS. The chain crosses the membrane as a helical span at residues 58 to 78; it reads GTITLYLIGFLILTTSLGVFC. Residues 79–86 lie on the Cytoplasmic side of the membrane; that stretch reads YQMKFYKA. The chain crosses the membrane as a helical span at residues 87 to 107; the sequence is IKVYVLANSIGILLVYSVFHF. The Lumenal segment spans residues 108–115; sequence QRIAEAQS. Residues 116 to 136 form a helical membrane-spanning segment; that stretch reads IPVSVPTFFFLILQFGGLGIT. At 137–148 the chain is on the cytoplasmic side; it reads CLHWKSHRRLHQ. The helical transmembrane segment at 149–169 threads the bilayer; it reads FYLIMLAGLTAIFILNILPDW. Position 170 (threonine 170) is a topological domain, lumenal. A helical transmembrane segment spans residues 171–191; the sequence is VWMALTAISFWDIVAVLTPCG. The active site involves aspartate 182. The Cytoplasmic portion of the chain corresponds to 192–273; sequence PLKMLVETAN…EVREVEGTIR (82 aa). Positions 221–240 are enriched in polar residues; sequence EVDSPDTTRSNSTPLTEFNN. A disordered region spans residues 221–242; that stretch reads EVDSPDTTRSNSTPLTEFNNSS. Residues 274-294 form a helical membrane-spanning segment; it reads LGMGDFVFYSLMLGNTVQTCP. The active site involves aspartate 278. The Lumenal portion of the chain corresponds to 295–297; it reads LPT. A helical membrane pass occupies residues 298 to 318; the sequence is VVACFVSNLVGLTITLPIVTL. The Cytoplasmic portion of the chain corresponds to 319–321; sequence SQT. An intramembrane region (helical) is located at residues 322–342; it reads ALPALPFPLAIAAIFYFSSHI. A PAL motif is present at residues 324–326; it reads PAL. Residues 343 to 358 lie on the Cytoplasmic side of the membrane; sequence ALTPFTDLCTSQLILI.

This sequence belongs to the peptidase A22A family. As to quaternary structure, homodimer. Component of the gamma-secretase complex, a complex probably composed of the presenilin homodimer (sel-12, hop-1 or spe-4), nicastrin (aph-2), aph-1 and pen-2. As to expression, weakly expressed.

It localises to the endoplasmic reticulum membrane. The protein resides in the golgi apparatus membrane. Functionally, probable catalytic subunit of the gamma-secretase complex, an endoprotease complex that catalyzes the intramembrane cleavage of integral membrane proteins such as Notch receptors (lin-12 or glp-1). Probably works redundantly of lin-12, which provides more presenilin function. In Caenorhabditis elegans, this protein is Presenilin hop-1 (hop-1).